The sequence spans 166 residues: Peroxynitrite isomerase Rv2717c (166 aa).

The GXWXGXG signature appears at 28–34 (GTWRGQG). Heme b contacts are provided by threonine 40 and histidine 158.

The protein belongs to the nitrobindin family. In terms of assembly, homodimer. Heme b serves as cofactor.

The protein resides in the cytoplasm. The enzyme catalyses peroxynitrite = nitrate. The protein operates within nitrogen metabolism. Its function is as follows. Heme-binding protein able to scavenge peroxynitrite and to protect free L-tyrosine against peroxynitrite-mediated nitration, by acting as a peroxynitrite isomerase that converts peroxynitrite to nitrate. Therefore, this protein likely plays a role in peroxynitrite sensing and in the detoxification of reactive nitrogen and oxygen species (RNS and ROS, respectively). Is able to bind nitric oxide (NO) in vitro, but may act as a sensor of peroxynitrite levels in vivo. The chain is Peroxynitrite isomerase Rv2717c from Arabidopsis thaliana (Mouse-ear cress).